The chain runs to 821 residues: Zinc finger protein 41 (821 aa).

The interval 1–55 (MAANGDSPPWSPALAAEGRGSSCEVRRERTPEARIHSVKRYPDLSPGPKGRSSAD) is disordered. The span at 24–35 (EVRRERTPEARI) shows a compositional bias: basic and acidic residues. In terms of domain architecture, KRAB spans 69-140 (VSFEDVTVDF…EGEAPHQSCS (72 aa)). Lysine 120 participates in a covalent cross-link: Glycyl lysine isopeptide (Lys-Gly) (interchain with G-Cter in SUMO2). The C2H2-type 1 zinc-finger motif lies at 313–335 (YVCTECVMGFTQKSHLFEHQRIH). The C2H2-type 2; degenerate zinc-finger motif lies at 341–364 (RECDKSNKVFPQKPQVDVHPSVYT). C2H2-type zinc fingers lie at residues 369-391 (YLCT…QKIH), 397-419 (YKCS…LRIH), 425-447 (YECS…QKTH), 453-475 (YECN…QRIH), 481-503 (YVCA…QRIH), 509-531 (YECS…QRIH), 537-559 (YICT…QKTH), 565-587 (YMCA…QKTH), 593-615 (YKCN…QKSH), and 621-643 (YECK…QRIH). Lysine 647 is covalently cross-linked (Glycyl lysine isopeptide (Lys-Gly) (interchain with G-Cter in SUMO2)). C2H2-type zinc fingers lie at residues 649–671 (YVCP…HRIH), 677–699 (YECS…QKIH), 705–727 (NICA…QKIH), 733–755 (YECG…QKSH), 761–783 (YECS…QIIH), and 789–811 (YACT…QKMH).

The protein belongs to the krueppel C2H2-type zinc-finger protein family. As to expression, expressed in the heart, brain, placenta, lung, liver, skeletal muscle, kidney and pancreas.

Its subcellular location is the nucleus. May be involved in transcriptional regulation. This chain is Zinc finger protein 41 (ZNF41), found in Homo sapiens (Human).